The following is a 435-amino-acid chain: MVDHSAALFNKAQNYMPGGVNSPVRAFGAVGGVPRFIKKASGPYLIDVDEKKYIDYVGSWGPMILGHAHPAVIQAAQEAVQNGLSFGAPCENEIKLAALIGEFMPSIEKVRMVNSGTEATMSALRLARGVTGRSKIIKFEGCYHGHADCLLVNAGSGALTFGMPSSPGVPLGTVQDTLTATFNDLDSVAALFEKYSKDIAAIIVEPIAGNMNLIPAAPDFLTGLRELCNQYGSLLIFDEVITGFRVAKGGAQSLYNIRPDLTALGKIIGGGMPVGAYGGRREIMNQLSPEGPVYQAGTLSGNPVAMAAGLATLKELTAENFYSNLKEKTERLVMGILSRAKAAKIPLTANFSCGVFGLIFTSEERVTRYAQAVNGNVEHFRSFFHKMLDNGVYLAPSAFESGFISAAHTNKEVDKTLDIIENIFSVSETYLRISV.

Lys266 carries the N6-(pyridoxal phosphate)lysine modification.

Belongs to the class-III pyridoxal-phosphate-dependent aminotransferase family. HemL subfamily. As to quaternary structure, homodimer. It depends on pyridoxal 5'-phosphate as a cofactor.

The protein localises to the cytoplasm. It catalyses the reaction (S)-4-amino-5-oxopentanoate = 5-aminolevulinate. It functions in the pathway porphyrin-containing compound metabolism; protoporphyrin-IX biosynthesis; 5-aminolevulinate from L-glutamyl-tRNA(Glu): step 2/2. This Coxiella burnetii (strain Dugway 5J108-111) protein is Glutamate-1-semialdehyde 2,1-aminomutase.